The following is a 470-amino-acid chain: 6-phospho-beta-galactosidase (470 aa).

D-galactose 6-phosphate contacts are provided by Gln19, His116, Asn159, Glu160, and Asn297. Glu160 (proton donor) is an active-site residue. Glu375 serves as the catalytic Nucleophile. 4 residues coordinate D-galactose 6-phosphate: Ser430, Trp431, Lys437, and Tyr439.

Belongs to the glycosyl hydrolase 1 family.

It carries out the reaction a 6-phospho-beta-D-galactoside + H2O = D-galactose 6-phosphate + an alcohol. It functions in the pathway carbohydrate metabolism; lactose degradation; D-galactose 6-phosphate and beta-D-glucose from lactose 6-phosphate: step 1/1. The chain is 6-phospho-beta-galactosidase from Staphylococcus aureus (strain USA300).